Reading from the N-terminus, the 211-residue chain is Peroxiredoxin (211 aa).

The Thioredoxin domain maps to 2-156 (PLLGDDFPEL…ILRAVKVLQI (155 aa)). Catalysis depends on cysteine 44, which acts as the Cysteine sulfenic acid (-SOH) intermediate. Arginine 119 contacts substrate. Cysteine 199 and cysteine 205 are oxidised to a cystine.

It belongs to the peroxiredoxin family. Prx6 subfamily. Homodecamer. Pentamer of dimers that assemble into a ring structure.

Its subcellular location is the cytoplasm. The enzyme catalyses a hydroperoxide + [thioredoxin]-dithiol = an alcohol + [thioredoxin]-disulfide + H2O. Thiol-specific peroxidase that catalyzes the reduction of hydrogen peroxide and organic hydroperoxides to water and alcohols, respectively. Plays a role in cell protection against oxidative stress by detoxifying peroxides. This chain is Peroxiredoxin, found in Chlorobaculum tepidum (strain ATCC 49652 / DSM 12025 / NBRC 103806 / TLS) (Chlorobium tepidum).